The chain runs to 188 residues: GMP synthase [glutamine-hydrolyzing] subunit A (188 aa).

Residues 2 to 188 enclose the Glutamine amidotransferase type-1 domain; the sequence is KIAVIYFGGQ…FKNFIEACKK (187 aa). The active-site Nucleophile is the C79. Residues H166 and E168 contribute to the active site.

As to quaternary structure, heterodimer composed of a glutamine amidotransferase subunit (A) and a GMP-binding subunit (B).

It catalyses the reaction XMP + L-glutamine + ATP + H2O = GMP + L-glutamate + AMP + diphosphate + 2 H(+). The protein operates within purine metabolism; GMP biosynthesis; GMP from XMP (L-Gln route): step 1/1. Functionally, catalyzes the synthesis of GMP from XMP. The protein is GMP synthase [glutamine-hydrolyzing] subunit A of Sulfurisphaera tokodaii (strain DSM 16993 / JCM 10545 / NBRC 100140 / 7) (Sulfolobus tokodaii).